A 346-amino-acid polypeptide reads, in one-letter code: MLWITRFAGLFSAAMAVIVLSPSLQSFPPAAAIRSSPSPIFRKAPAVFNNGDECLSSGGVCNPSLVHVAITLDVEYLRGSIAAVNSILQHSVCPESVFFHFIAVSEETNLLESLVRSVFPRLKFNIYDFAPETVRGLISSSVRQALEQPLNYARSYLADLLEPCVNRVIYLDSDLVVVDDIAKLWKTSLGSRIIGAPEYCHANFTKYFTGGFWSEERFSGTFRGRKPCYFNTGVMVIDLKKWRRGGYTKRIEKWMEIQRRERIYELGSLPPFLLVFSGHVAPISHRWNQHGLGGDNVRGSCRDLHPGPVSLLHWSGSGKPWIRLDSKRPCPLDALWTPYDLYRHSH.

A helical; Signal-anchor for type II membrane protein membrane pass occupies residues 1–21 (MLWITRFAGLFSAAMAVIVLS). At 22–346 (PSLQSFPPAA…TPYDLYRHSH (325 aa)) the chain is on the lumenal side. A glycan (N-linked (GlcNAc...) asparagine) is linked at N203.

Belongs to the glycosyltransferase 8 family.

The protein localises to the golgi apparatus membrane. It participates in glycan metabolism; pectin biosynthesis. Functionally, may be involved in pectin and/or xylans biosynthesis in cell walls. The chain is Probable galacturonosyltransferase-like 6 (GATL6) from Arabidopsis thaliana (Mouse-ear cress).